Here is a 323-residue protein sequence, read N- to C-terminus: Probable inactive poly [ADP-ribose] polymerase SRO2 (323 aa).

The 227-residue stretch at 31–257 folds into the PARP catalytic domain; it reads SSVSHAGSSF…FASRPSSPWV (227 aa). The region spanning 250-321 is the RST domain; sequence SRPSSPWVSF…IKNHKNRNKV (72 aa).

Interacts with STO.

The protein localises to the nucleus. In terms of biological role, probable inactive ADP-ribosyltransferase that may be involved in stress and developmental responses. The polypeptide is Probable inactive poly [ADP-ribose] polymerase SRO2 (SRO2) (Arabidopsis thaliana (Mouse-ear cress)).